A 374-amino-acid polypeptide reads, in one-letter code: S-adenosylmethionine:tRNA ribosyltransferase-isomerase (374 aa).

It belongs to the QueA family. Monomer.

The protein localises to the cytoplasm. It carries out the reaction 7-aminomethyl-7-carbaguanosine(34) in tRNA + S-adenosyl-L-methionine = epoxyqueuosine(34) in tRNA + adenine + L-methionine + 2 H(+). Its pathway is tRNA modification; tRNA-queuosine biosynthesis. In terms of biological role, transfers and isomerizes the ribose moiety from AdoMet to the 7-aminomethyl group of 7-deazaguanine (preQ1-tRNA) to give epoxyqueuosine (oQ-tRNA). The protein is S-adenosylmethionine:tRNA ribosyltransferase-isomerase of Prochlorococcus marinus (strain AS9601).